Consider the following 367-residue polypeptide: tRNA-specific 2-thiouridylase MnmA (367 aa).

ATP is bound by residues 12–19 and Met38; that span reads GMSGGVDS. The segment at 98-100 is interaction with target base in tRNA; the sequence is NPD. The Nucleophile role is filled by Cys103. A disulfide bridge connects residues Cys103 and Cys200. Residue Gly128 coordinates ATP. Positions 150-152 are interaction with tRNA; sequence KDQ. The active-site Cysteine persulfide intermediate is Cys200. The segment at 312–313 is interaction with tRNA; that stretch reads RY.

This sequence belongs to the MnmA/TRMU family. In terms of assembly, interacts with TusE.

The protein resides in the cytoplasm. The catalysed reaction is S-sulfanyl-L-cysteinyl-[protein] + uridine(34) in tRNA + AH2 + ATP = 2-thiouridine(34) in tRNA + L-cysteinyl-[protein] + A + AMP + diphosphate + H(+). Its function is as follows. Catalyzes the 2-thiolation of uridine at the wobble position (U34) of tRNA(Lys), tRNA(Glu) and tRNA(Gln), leading to the formation of s(2)U34, the first step of tRNA-mnm(5)s(2)U34 synthesis. Sulfur is provided by IscS, via a sulfur-relay system. Binds ATP and its substrate tRNAs. The sequence is that of tRNA-specific 2-thiouridylase MnmA from Blochmanniella pennsylvanica (strain BPEN).